Reading from the N-terminus, the 697-residue chain is Gametogenetin-binding protein 2 (697 aa).

Residue S360 is modified to Phosphoserine.

As to quaternary structure, interacts with GGN. Expressed in heart, brain, placenta, lung, liver, skeletal muscle, kidney and pancreas. Expressed more abundantly in heart, pancreas and skeletal muscle.

It is found in the cytoplasmic vesicle. Functionally, may be involved in spermatogenesis. The polypeptide is Gametogenetin-binding protein 2 (GGNBP2) (Homo sapiens (Human)).